The primary structure comprises 1373 residues: TAL effector protein PthXo1 (1373 aa).

2 disordered regions span residues 1-68 (MDPI…SAGS) and 127-152 (AARP…PAAQ). A compositionally biased stretch (basic residues) spans 131–141 (PRAKPAPRRRA). Residues 142-152 (AQPSDASPAAQ) are compositionally biased toward low complexity. The stretch at 221–239 (THEDIVGVGKQWSGARALE) is one Cryptic repeat -1 repeat. The stretch at 256-273 (DTGQLVKIAKRGGVTAVE) is one Cryptic repeat 0 repeat. Core repeat repeat units lie at residues 289–322 (LTPA…QAHG), 323–356 (LTPA…QAHG), 357–390 (LPPD…QAHG), 391–424 (LTPD…QAHG), 425–458 (LTPD…QAHG), 459–492 (LTPD…QAHG), 493–525 (LTPD…QAHG), 526–559 (LTPD…QTHG), 560–593 (LTPA…QAHG), 594–627 (LTPD…QAHG), 628–661 (LTPD…QAHG), 662–695 (LTPD…QAHG), 696–729 (LTQV…QAHG), 730–763 (LTPA…QAHG), 764–797 (LTPD…QAHG), 798–831 (LTQE…QAHG), 832–865 (LTPD…QAHG), 866–899 (LTPA…QDHG), 900–933 (LTLA…QAHG), 934–967 (LTQD…QDHG), 968–1001 (LTPD…QDHG), 1002–1034 (LTLD…QDHG), and 1035–1068 (LTPD…QDHG). HEAT repeat units follow at residues 714–760 (LETV…VLCQ), 782–828 (LETV…VLCQ), 850–893 (LETV…LLPV), and 918–961 (LETV…LLPV). One copy of the HEAT 5 repeat lies at 1053–1091 (LETVQRLLPVLCQDHGLTPNQVVAIASNGGKQALESIVA). The Core repeat 23.5 repeat unit spans residues 1069–1087 (LTPNQVVAIASNGGKQALE). The acidic activation domain stretch occupies residues 1136–1364 (RVNRRIGERT…ELAWLMELLP (229 aa)). A Nuclear localization signal NLS1 motif is present at residues 1222 to 1225 (KRAK). Residues 1250 to 1286 (LDAPSPMHEGDQTGASSRKRSRSDRAVTGPSAQHSFE) form a disordered region. The Nuclear localization signal NLS2 motif lies at 1268–1271 (KRSR). A Nuclear localization signal NLS3 motif is present at residues 1305–1308 (KRPR).

It belongs to the transcription activator-like effector (TALE) family.

Its subcellular location is the secreted. The protein localises to the host nucleus. Functionally, avirulence protein. Acts as a transcription factor in rice, inducing expression of a number of host genes including SWEET11 (Os8N3, XA13, AC Q6YZF3) in susceptible plants with the Xa13 allele. Plants with the xa13 allele, which has an altered promoter, are resistant to bacterial blight caused by this bacterial strain and do not induce SWEET11. The xa13 allele elicits an atypical hypersensitive response (HR). PthXo1 binds SWEET11 promoter DNA in a sequence-specific manner. The chain is TAL effector protein PthXo1 (pthXo1) from Xanthomonas oryzae pv. oryzae (strain PXO99A).